Reading from the N-terminus, the 35-residue chain is 5'-methylthioadenosine/S-adenosylhomocysteine nucleosidase (35 aa).

E12 acts as the Proton acceptor in catalysis.

The protein belongs to the PNP/UDP phosphorylase family. MtnN subfamily. Homodimer.

It catalyses the reaction S-adenosyl-L-homocysteine + H2O = S-(5-deoxy-D-ribos-5-yl)-L-homocysteine + adenine. The enzyme catalyses S-methyl-5'-thioadenosine + H2O = 5-(methylsulfanyl)-D-ribose + adenine. It carries out the reaction 5'-deoxyadenosine + H2O = 5-deoxy-D-ribose + adenine. It participates in amino-acid biosynthesis; L-methionine biosynthesis via salvage pathway; S-methyl-5-thio-alpha-D-ribose 1-phosphate from S-methyl-5'-thioadenosine (hydrolase route): step 1/2. In terms of biological role, catalyzes the irreversible cleavage of the glycosidic bond in both 5'-methylthioadenosine (MTA) and S-adenosylhomocysteine (SAH/AdoHcy) to adenine and the corresponding thioribose, 5'-methylthioribose and S-ribosylhomocysteine, respectively. Also cleaves 5'-deoxyadenosine, a toxic by-product of radical S-adenosylmethionine (SAM) enzymes, into 5-deoxyribose and adenine. Thus, is required for in vivo function of the radical SAM enzymes biotin synthase and lipoic acid synthase, that are inhibited by 5'-deoxyadenosine accumulation. The sequence is that of 5'-methylthioadenosine/S-adenosylhomocysteine nucleosidase (mtnN) from Klebsiella pneumoniae.